Consider the following 288-residue polypeptide: NAD(P)H-hydrate epimerase (288 aa).

The N-terminal 59 residues, 1–59 (MSGLRALLGLGLPVAGSRLPRVRVQAGACRARPTWWGPQRLISGGRGDVEGMASSAVKY), are a transit peptide targeting the mitochondrion. One can recognise a YjeF N-terminal domain in the interval 65–275 (AQAVDQELFN…ALEKKYQLNL (211 aa)). 119 to 123 (NNGGD) is a (6S)-NADPHX binding site. Asn-120 serves as a coordination point for K(+). At Lys-144 the chain carries N6-succinyllysine. Residue Asp-185 participates in K(+) binding. (6S)-NADPHX-binding positions include 189–195 (GFSFKGE) and Asp-218. Ser-221 serves as a coordination point for K(+).

This sequence belongs to the NnrE/AIBP family. As to quaternary structure, homodimer. Interacts with APOA1 and APOA2. The cofactor is K(+). Undergoes physiological phosphorylation during sperm capacitation, downstream to PKA activation.

The protein resides in the mitochondrion. The protein localises to the secreted. The catalysed reaction is (6R)-NADHX = (6S)-NADHX. It carries out the reaction (6R)-NADPHX = (6S)-NADPHX. Its function is as follows. Catalyzes the epimerization of the S- and R-forms of NAD(P)HX, a damaged form of NAD(P)H that is a result of enzymatic or heat-dependent hydration. This is a prerequisite for the S-specific NAD(P)H-hydrate dehydratase to allow the repair of both epimers of NAD(P)HX. Accelerates cholesterol efflux from endothelial cells to high-density lipoprotein (HDL) and thereby regulates angiogenesis. The protein is NAD(P)H-hydrate epimerase of Sus scrofa (Pig).